A 256-amino-acid polypeptide reads, in one-letter code: Hydroxypyruvate/pyruvate aldolase (256 aa).

Histidine 48 serves as the catalytic Proton acceptor. A divalent metal cation is bound by residues glutamate 152 and aspartate 178.

It belongs to the HpcH/HpaI aldolase family. Requires a divalent metal cation as cofactor.

The catalysed reaction is D-glyceraldehyde + pyruvate = 2-dehydro-3-deoxy-L-galactonate. Its function is as follows. Aldolase which can catalyze in vitro the aldolisation reaction between hydroxypyruvate (HPA) or pyruvate (PA) and D-glyceraldehyde (D-GA). The condensation of pyruvate and D-glyceraldehyde produces 2-dehydro-3-deoxy-L-galactonate as the major product. Has weak activity with hydroxypyruvate and D-glyceraldehyde. The protein is Hydroxypyruvate/pyruvate aldolase of Roseobacter denitrificans (strain ATCC 33942 / OCh 114) (Erythrobacter sp. (strain OCh 114)).